Here is a 39-residue protein sequence, read N- to C-terminus: Fuctinin-3 (39 aa).

The interval 1-39 (KELNSNHDGADETSEKEQQEAIEHIDEVQNEIDRLNETA) is disordered.

The protein to human SET/PHAPII protein. In terms of assembly, oligomer.

The protein localises to the cytoplasm. In terms of biological role, has a role in the physiological regulation of fucosylation processes. The polypeptide is Fuctinin-3 (Rattus norvegicus (Rat)).